We begin with the raw amino-acid sequence, 440 residues long: Probable circularly permuted 1,3-beta-glucanase (440 aa).

An N-terminal signal peptide occupies residues 1–20 (MHYSLFFGAALAASVSTVSA). A compositionally biased stretch (basic and acidic residues) spans 100–112 (GEKPKRELKPSIH). Disordered stretches follow at residues 100–126 (GEKP…FHEK) and 153–195 (PAAP…VAPG). Basic residues predominate over residues 113 to 125 (ERRHGHSHQRFHE). A compositionally biased stretch (low complexity) spans 153–164 (PAAPTSAPGAPG). A compositionally biased stretch (basic and acidic residues) spans 177-186 (GGDKPKDPKP). An ExDxxE motif motif is present at residues 350-355 (EFDVLE).

This sequence belongs to the PGA52 family.

The protein localises to the secreted. The catalysed reaction is Hydrolysis of (1-&gt;3)-beta-D-glucosidic linkages in (1-&gt;3)-beta-D-glucans.. Its function is as follows. Probable circularly permuted 1,3-beta-glucanase involved in cell wall modification through beta-1,3-glucan network alterations such as increased branching or remodeling. The chain is Probable circularly permuted 1,3-beta-glucanase from Arthroderma benhamiae (strain ATCC MYA-4681 / CBS 112371) (Trichophyton mentagrophytes).